Consider the following 299-residue polypeptide: Very long chain fatty acid elongase 5 (299 aa).

Methionine 1 carries the post-translational modification N-acetylmethionine. 7 helical membrane passes run 26–46 (WFLLDNYIPTFICSVIYLLIV), 64–84 (ILVVYNLGLTLLSLYMFCELV), 112–132 (VLWWYYFSKLIEFMDTFFFIL), 139–158 (ITVLHVYHHASMLNIWWFVM), 168–187 (FGATLNSFIHVLMYSYYGLS), 205–225 (GQLLQFVLTIIQTSCGVIWPC), and 226–246 (TFPLGWLYFQIGYMISLIALF). Residues 274–299 (MAAVNGHTNSFSPLENNVKPRKLRKD) form a disordered region. Polar residues predominate over residues 279-288 (GHTNSFSPLE). Serine 285 bears the Phosphoserine mark.

The protein belongs to the ELO family. ELOVL5 subfamily. Interacts with TECR. As to expression, ubiquitous. Highly expressed in the adrenal gland and testis. Weakly expressed in prostate, lung and brain. Expressed in the cerebellum.

The protein localises to the endoplasmic reticulum membrane. The protein resides in the cell projection. Its subcellular location is the dendrite. It carries out the reaction a very-long-chain acyl-CoA + malonyl-CoA + H(+) = a very-long-chain 3-oxoacyl-CoA + CO2 + CoA. The enzyme catalyses (6Z,9Z,12Z)-octadecatrienoyl-CoA + malonyl-CoA + H(+) = (8Z,11Z,14Z)-3-oxoeicosatrienoyl-CoA + CO2 + CoA. It catalyses the reaction (9Z,12Z,15Z)-octadecatrienoyl-CoA + malonyl-CoA + H(+) = (11Z,14Z,17Z)-3-oxoeicosatrienoyl-CoA + CO2 + CoA. The catalysed reaction is (9Z)-hexadecenoyl-CoA + malonyl-CoA + H(+) = 3-oxo-(11Z)-octadecenoyl-CoA + CO2 + CoA. It carries out the reaction (9Z)-octadecenoyl-CoA + malonyl-CoA + H(+) = 3-oxo-(11Z)-eicosenoyl-CoA + CO2 + CoA. The enzyme catalyses (11Z)-octadecenoyl-CoA + malonyl-CoA + H(+) = 3-oxo-(13Z)-eicosenoyl-CoA + CO2 + CoA. It catalyses the reaction (9Z,12Z)-octadecadienoyl-CoA + malonyl-CoA + H(+) = (11Z,14Z)-3-oxoicosa-11,14-dienoyl-CoA + CO2 + CoA. The catalysed reaction is (6Z,9Z,12Z,15Z)-octadecatetraenoyl-CoA + malonyl-CoA + H(+) = (8Z,11Z,14Z,17Z)-3-oxoicosatetraenoyl-CoA + CO2 + CoA. It carries out the reaction (5Z,8Z,11Z,14Z)-eicosatetraenoyl-CoA + malonyl-CoA + H(+) = (7Z,10Z,13Z,16Z)-3-oxodocosatetraenoyl-CoA + CO2 + CoA. The enzyme catalyses (5Z,8Z,11Z,14Z,17Z)-eicosapentaenoyl-CoA + malonyl-CoA + H(+) = 3-oxo-(7Z,10Z,13Z,16Z,19Z)-docosapentaenoyl-CoA + CO2 + CoA. Its pathway is lipid metabolism; polyunsaturated fatty acid biosynthesis. Functionally, catalyzes the first and rate-limiting reaction of the four reactions that constitute the long-chain fatty acids elongation cycle. This endoplasmic reticulum-bound enzymatic process allows the addition of 2 carbons to the chain of long- and very long-chain fatty acids (VLCFAs) per cycle. Condensing enzyme that acts specifically toward polyunsaturated acyl-CoA with the higher activity toward C18:3(n-6) acyl-CoA. May participate in the production of monounsaturated and of polyunsaturated VLCFAs of different chain lengths that are involved in multiple biological processes as precursors of membrane lipids and lipid mediators. In conditions where the essential linoleic and alpha linoleic fatty acids are lacking it is also involved in the synthesis of Mead acid from oleic acid. The sequence is that of Very long chain fatty acid elongase 5 from Homo sapiens (Human).